The following is a 348-amino-acid chain: Major outer membrane protein (348 aa).

The N-terminal stretch at 1-20 (MKKTIVALAVAAVAATSANA) is a signal peptide.

Disulfide bond interactions within and between MOMP molecules and other components form high molecular-weight oligomers.

It is found in the cell outer membrane. In terms of biological role, structural rigidity of the outer membrane of elementary bodies and porin forming, permitting diffusion of solutes through the intracellular reticulate body membrane. This Pasteurella multocida (strain Pm70) protein is Major outer membrane protein (ompH).